The primary structure comprises 122 residues: Large ribosomal subunit protein eL34 (122 aa).

This sequence belongs to the eukaryotic ribosomal protein eL34 family. Component of the large ribosomal subunit. Mature ribosomes consist of a small (40S) and a large (60S) subunit. The 40S subunit contains about 32 different proteins and 1 molecule of RNA (18S). The 60S subunit contains 45 different proteins and 3 molecules of RNA (25S, 5.8S and 5S).

It localises to the cytoplasm. Its function is as follows. Component of the ribosome, a large ribonucleoprotein complex responsible for the synthesis of proteins in the cell. The small ribosomal subunit (SSU) binds messenger RNAs (mRNAs) and translates the encoded message by selecting cognate aminoacyl-transfer RNA (tRNA) molecules. The large subunit (LSU) contains the ribosomal catalytic site termed the peptidyl transferase center (PTC), which catalyzes the formation of peptide bonds, thereby polymerizing the amino acids delivered by tRNAs into a polypeptide chain. The nascent polypeptides leave the ribosome through a tunnel in the LSU and interact with protein factors that function in enzymatic processing, targeting, and the membrane insertion of nascent chains at the exit of the ribosomal tunnel. The polypeptide is Large ribosomal subunit protein eL34 (Candida albicans (strain SC5314 / ATCC MYA-2876) (Yeast)).